A 506-amino-acid polypeptide reads, in one-letter code: Glutamyl-tRNA(Gln) amidotransferase subunit A, mitochondrial (506 aa).

Active-site charge relay system residues include Lys62 and Ser141. The active-site Acyl-ester intermediate is the Ser165.

The protein belongs to the amidase family. GatA subfamily. Subunit of the heterotrimeric GatCAB amidotransferase (AdT) complex, composed of A, B and C subunits.

It localises to the mitochondrion. It carries out the reaction L-glutamyl-tRNA(Gln) + L-glutamine + ATP + H2O = L-glutaminyl-tRNA(Gln) + L-glutamate + ADP + phosphate + H(+). Functionally, allows the formation of correctly charged Gln-tRNA(Gln) through the transamidation of misacylated Glu-tRNA(Gln) in the mitochondria. The reaction takes place in the presence of glutamine and ATP through an activated gamma-phospho-Glu-tRNA(Gln). The protein is Glutamyl-tRNA(Gln) amidotransferase subunit A, mitochondrial of Emericella nidulans (strain FGSC A4 / ATCC 38163 / CBS 112.46 / NRRL 194 / M139) (Aspergillus nidulans).